The primary structure comprises 708 residues: Metal-pseudopaline receptor CntO (708 aa).

An N-terminal signal peptide occupies residues 1–21; the sequence is MRVSVSLVLGVGLGCSSPALW. One can recognise a TBDR plug domain in the interval 63–169; sequence RIEDIPQAIS…PGGTVNLVTK (107 aa). The 535-residue stretch at 174–708 folds into the TBDR beta-barrel domain; it reads ERFARLHASA…NLTMSLTLNY (535 aa).

The protein belongs to the TonB-dependent receptor family.

The protein localises to the cell outer membrane. Transports the metallophore pseudopaline, which is involved in the acquisition of nickel and zinc, and thus enables bacterial growth inside the host, where metal access is limited. Is probably involved in the import of pseudopaline-metal complexes. This Pseudomonas aeruginosa (strain ATCC 15692 / DSM 22644 / CIP 104116 / JCM 14847 / LMG 12228 / 1C / PRS 101 / PAO1) protein is Metal-pseudopaline receptor CntO.